The following is a 37-amino-acid chain: uncharacterized protein (37 aa).

The helical transmembrane segment at 13–33 threads the bilayer; the sequence is TFLTIIVLLMIVFGIAIVALL.

The protein localises to the host membrane. This is an uncharacterized protein from Acidianus convivator (ABV).